A 243-amino-acid polypeptide reads, in one-letter code: Adenine phosphoribosyltransferase 1, chloroplastic (243 aa).

Residues 1–52 (MQTIIISPLVSHRLCLARAVPCNRLLNNHHRAPPSIRLSNHRSTTSLRLFSS) constitute a chloroplast transit peptide. At Gln-2 the chain carries N-acetylalanine.

Belongs to the purine/pyrimidine phosphoribosyltransferase family. Homodimer.

The protein localises to the plastid. Its subcellular location is the chloroplast. The protein resides in the cytoplasm. The enzyme catalyses AMP + diphosphate = 5-phospho-alpha-D-ribose 1-diphosphate + adenine. It functions in the pathway purine metabolism; AMP biosynthesis via salvage pathway; AMP from adenine: step 1/1. Functionally, catalyzes a salvage reaction resulting in the formation of AMP, that is energically less costly than de novo synthesis. Contributes primarily to the recycling of adenine into adenylate nucleotides, but is also involved in the inactivation of cytokinins by phosphoribosylation. Catalyzes the conversion of cytokinins from free bases (active form) to the corresponding nucleotides (inactive form). In Arabidopsis thaliana (Mouse-ear cress), this protein is Adenine phosphoribosyltransferase 1, chloroplastic (APT1).